The primary structure comprises 326 residues: Putative ribose-phosphate pyrophosphokinase 2 (326 aa).

Residues 43 to 45 (DGE) and 102 to 103 (RQ) contribute to the ATP site. Histidine 136 lines the Mg(2+) pocket. D-ribose 5-phosphate contacts are provided by residues aspartate 226 and 230-234 (NTGKT).

Belongs to the ribose-phosphate pyrophosphokinase family. Class I subfamily. Homohexamer. Requires Mg(2+) as cofactor.

The protein localises to the cytoplasm. The enzyme catalyses D-ribose 5-phosphate + ATP = 5-phospho-alpha-D-ribose 1-diphosphate + AMP + H(+). It functions in the pathway metabolic intermediate biosynthesis; 5-phospho-alpha-D-ribose 1-diphosphate biosynthesis; 5-phospho-alpha-D-ribose 1-diphosphate from D-ribose 5-phosphate (route I): step 1/1. Functionally, involved in the biosynthesis of the central metabolite phospho-alpha-D-ribosyl-1-pyrophosphate (PRPP) via the transfer of pyrophosphoryl group from ATP to 1-hydroxyl of ribose-5-phosphate (Rib-5-P). In Streptococcus mutans serotype c (strain ATCC 700610 / UA159), this protein is Putative ribose-phosphate pyrophosphokinase 2.